Reading from the N-terminus, the 436-residue chain is GTPase Der (436 aa).

EngA-type G domains follow at residues 4-167 (PVIA…PKIE) and 176-351 (IRFS…ESHS). GTP contacts are provided by residues 10–17 (GRPNVGKS), 57–61 (DTGGI), 119–122 (NKVD), 182–189 (GRPNVGKS), 229–233 (DTAGM), and 294–297 (NKWD). Positions 352 to 436 (IRIQTNVLND…PIHIIARARD (85 aa)) constitute a KH-like domain.

It belongs to the TRAFAC class TrmE-Era-EngA-EngB-Septin-like GTPase superfamily. EngA (Der) GTPase family. In terms of assembly, associates with the 50S ribosomal subunit.

In terms of biological role, GTPase that plays an essential role in the late steps of ribosome biogenesis. In Bacillus cereus (strain ATCC 10987 / NRS 248), this protein is GTPase Der.